A 692-amino-acid polypeptide reads, in one-letter code: Elongation factor G (692 aa).

A tr-type G domain is found at 8-283; the sequence is KNTRNIGIMA…AVLDYLPSPV (276 aa). GTP contacts are provided by residues 17 to 24, 81 to 85, and 135 to 138; these read AHIDAGKT, DTPGH, and NKMD.

This sequence belongs to the TRAFAC class translation factor GTPase superfamily. Classic translation factor GTPase family. EF-G/EF-2 subfamily.

Its subcellular location is the cytoplasm. Catalyzes the GTP-dependent ribosomal translocation step during translation elongation. During this step, the ribosome changes from the pre-translocational (PRE) to the post-translocational (POST) state as the newly formed A-site-bound peptidyl-tRNA and P-site-bound deacylated tRNA move to the P and E sites, respectively. Catalyzes the coordinated movement of the two tRNA molecules, the mRNA and conformational changes in the ribosome. The sequence is that of Elongation factor G from Exiguobacterium sibiricum (strain DSM 17290 / CCUG 55495 / CIP 109462 / JCM 13490 / 255-15).